The following is a 438-amino-acid chain: Cyclic 2,3-diphosphoglycerate synthetase (438 aa).

It belongs to the cyclic 2,3-diphosphoglycerate synthetase family.

It is found in the cytoplasm. It carries out the reaction (2R)-2,3-bisphosphoglycerate + ATP + H(+) = cyclic (2R)-2,3-bisphosphoglycerate + ADP + phosphate. In terms of biological role, catalyzes the formation of cyclic 2,3-diphosphoglycerate (cDPG) by formation of an intramolecular phosphoanhydride bond at the expense of ATP. This is Cyclic 2,3-diphosphoglycerate synthetase from Thermococcus gammatolerans (strain DSM 15229 / JCM 11827 / EJ3).